The primary structure comprises 399 residues: Protein DDI1 homolog 2 (399 aa).

The Ubiquitin-like domain maps to 1-81 (MLLTVYCVRR…VILRQKENAD (81 aa)). The tract at residues 99-134 (IAVPGTSSPRQRQPPGTQQSHSSPGEITSSPQGLDN) is disordered. Residues 103 to 131 (GTSSPRQRQPPGTQQSHSSPGEITSSPQG) are compositionally biased toward polar residues. Thr-104 is modified (phosphothreonine). A phosphoserine mark is found at Ser-106, Ser-121, Ser-128, Ser-150, and Ser-194. Asp-252 is an active-site residue. Residues 376 to 395 (EEIADQELAEALQKSAEDAE) carry the Ubiquitin-binding motif.

The protein belongs to the DDI1 family. As to quaternary structure, homodimer. Interacts with MCM6; PCNA; PSMD4; PSMD8; RPA2 and RPN2. Interacts with RTF2.

Its subcellular location is the cytoplasm. The protein resides in the cytosol. It localises to the chromosome. Its function is as follows. Aspartic protease that mediates the cleavage of NFE2L1/NRF1 at 'Leu-104', thereby promoting release of NFE2L1/NRF1 from the endoplasmic reticulum membrane. Ubiquitination of NFE2L1/NRF1 is a prerequisite for cleavage, suggesting that DDI2 specifically recognizes and binds ubiquitinated NFE2L1/NRF1. Seems to act as a proteasomal shuttle which links the proteasome and replication fork proteins like RTF2. Required, with DDI1, for cellular survival following replication stress. Together or redudantly with DDI1, removes RTF2 from stalled forks to allow cell cycle progression after replication stress and maintains genome integrity. The polypeptide is Protein DDI1 homolog 2 (Homo sapiens (Human)).